We begin with the raw amino-acid sequence, 325 residues long: MQNSLLKPRIIEVEVLGAGHAKVVMEPFERGYGHTLGNALRRVLLSSMVGYAPTEVTIAGVVHEYSSLDGVQEDVVDLLLNLKGVVFKLHNRDDVTLTLKKDGEGAVLASDIELPHDVELVNPDHVIAHLTAGGKLDMQIKVEKGRGYVPGNVRRLSEDTNKTIGRIILDASFSPVRRVSYAVESARVEQRTDLDKLVINIETNGVISPEEAIRQSARVLVDQLNVFAALEGTEAPADAPSRAPAVDPILLRPVDDLELTVRSANCLKAENIYYIGDLIQRSENELLKTPNLGRKSLNEIKEVLASRGLTLGMKLENWPPAGLEK.

An alpha N-terminal domain (alpha-NTD) region spans residues 1–231; sequence MQNSLLKPRI…DQLNVFAALE (231 aa). Residues 246–325 are alpha C-terminal domain (alpha-CTD); it reads VDPILLRPVD…ENWPPAGLEK (80 aa).

This sequence belongs to the RNA polymerase alpha chain family. Homodimer. The RNAP catalytic core consists of 2 alpha, 1 beta, 1 beta' and 1 omega subunit. When a sigma factor is associated with the core the holoenzyme is formed, which can initiate transcription.

The enzyme catalyses RNA(n) + a ribonucleoside 5'-triphosphate = RNA(n+1) + diphosphate. DNA-dependent RNA polymerase catalyzes the transcription of DNA into RNA using the four ribonucleoside triphosphates as substrates. The polypeptide is DNA-directed RNA polymerase subunit alpha (Janthinobacterium sp. (strain Marseille) (Minibacterium massiliensis)).